A 382-amino-acid chain; its full sequence is D-alanine--D-alanine ligase (382 aa).

An ATP-grasp domain is found at 161 to 372 (KVVFEAAGLQ…YAELIDELIY (212 aa)). 193 to 248 (VDRLGYPVFVKPARAGSSMGISKVDSLEGLDAAIAAAREHDLKLVIEAGIVGREIE) lines the ATP pocket. Residues D326, E339, and N341 each contribute to the Mg(2+) site.

The protein belongs to the D-alanine--D-alanine ligase family. Mg(2+) serves as cofactor. Requires Mn(2+) as cofactor.

The protein localises to the cytoplasm. It catalyses the reaction 2 D-alanine + ATP = D-alanyl-D-alanine + ADP + phosphate + H(+). It functions in the pathway cell wall biogenesis; peptidoglycan biosynthesis. In terms of biological role, cell wall formation. The protein is D-alanine--D-alanine ligase of Arthrobacter sp. (strain FB24).